The sequence spans 729 residues: MLYKGDTLYLDWLEDGIAELVFDAPGSVNKLDTATVASLGEAIGVLEQQSDLKGLLLRSNKAAFIVGADITEFLSLFLVPEEQLSQWLQFANSVFNRLEDLPVPTIAAVNGYALGGGCECVLATDYRLATPDLRIGLPETKLGIMPGFGGSVRMPRMLGADSALEIIAAGKDVGADQALKIGLVDGVVKAEKLVEGAKAVLRQAINGDLDWKAKRQPKLEPLKLSKIEATMSFTIAKGMVAQTAGKHYPAPITAVKTIEAAARFGREEALNLENKSFVPLAHTNEARALVGIFLNDQYVKGKAKKLTKDVETPKQAAVLGAGIMGGGIAYQSAWKGVPVVMKDINDKSLTLGMTEAAKLLNKQLERGKIDGLKLAGVISTIHPTLDYAGFDRVDVVVEAVVENPKVKKAVLAETEQKVRPDTVLASNTSTIPISELANALERPENFCGMHFFNPVHRMPLVEIIRGEKSSDETIAKVVAWASKMGKTPIVVNDCPGFFVNRVLFPYFAGFSQLLRDGADFRKIDKVMEKQFGWPMGPAYLLDVVGIDTAHHAQAVMAAGFPQRMQKDYRDAIDALFDANRFGQKNGLGFWRYKEDSKGKPKKEEDAVVDDLLAEVSQPKRDFSEEEIIARMMIPMVNEVVRCLEESIIATPAEADMALIYGLGFPPFHGGAFRWLDTLGSAKYLDMAQQYQHLGPLYEVPEGLRNKARHNEPYYPPVEPARPVGDLKTA.

Residues 1–189 (MLYKGDTLYL…KIGLVDGVVK (189 aa)) form an enoyl-CoA hydratase/isomerase region. Aspartate 296 serves as a coordination point for substrate. A 3-hydroxyacyl-CoA dehydrogenase region spans residues 311–729 (ETPKQAAVLG…ARPVGDLKTA (419 aa)). Residues methionine 324, aspartate 343, 400-402 (VVE), lysine 407, and serine 429 each bind NAD(+). Catalysis depends on histidine 450, which acts as the For 3-hydroxyacyl-CoA dehydrogenase activity. Position 453 (asparagine 453) interacts with NAD(+). 2 residues coordinate substrate: asparagine 500 and tyrosine 660. Residues 708-729 (RHNEPYYPPVEPARPVGDLKTA) form a disordered region.

The protein in the N-terminal section; belongs to the enoyl-CoA hydratase/isomerase family. This sequence in the C-terminal section; belongs to the 3-hydroxyacyl-CoA dehydrogenase family. As to quaternary structure, heterotetramer of two alpha chains (FadB) and two beta chains (FadA).

The catalysed reaction is a (3S)-3-hydroxyacyl-CoA + NAD(+) = a 3-oxoacyl-CoA + NADH + H(+). The enzyme catalyses a (3S)-3-hydroxyacyl-CoA = a (2E)-enoyl-CoA + H2O. It catalyses the reaction a 4-saturated-(3S)-3-hydroxyacyl-CoA = a (3E)-enoyl-CoA + H2O. It carries out the reaction (3S)-3-hydroxybutanoyl-CoA = (3R)-3-hydroxybutanoyl-CoA. The catalysed reaction is a (3Z)-enoyl-CoA = a 4-saturated (2E)-enoyl-CoA. The enzyme catalyses a (3E)-enoyl-CoA = a 4-saturated (2E)-enoyl-CoA. It participates in lipid metabolism; fatty acid beta-oxidation. Involved in the aerobic and anaerobic degradation of long-chain fatty acids via beta-oxidation cycle. Catalyzes the formation of 3-oxoacyl-CoA from enoyl-CoA via L-3-hydroxyacyl-CoA. It can also use D-3-hydroxyacyl-CoA and cis-3-enoyl-CoA as substrate. The chain is Fatty acid oxidation complex subunit alpha from Escherichia coli O139:H28 (strain E24377A / ETEC).